The primary structure comprises 360 residues: Tyrosine-protein phosphatase non-receptor type 7 (360 aa).

A disordered region spans residues 1-37 (MVQAHGGRSRAQPLTLSLGAAMTQPPPEKTPAKKHVR). The segment at 38 to 51 (LQERRGSNVALMLD) is interaction with MAP kinases. The residue at position 44 (Ser44) is a Phosphoserine. Thr66 bears the Phosphothreonine mark. Residues Ser93, Ser110, and Ser143 each carry the phosphoserine modification. Residues 97-350 (LEEEFLKIPS…QFLHHTLALY (254 aa)) form the Tyrosine-protein phosphatase domain. Substrate is bound by residues Asp257, 291–297 (CSAGIGR), and Gln335. The active-site Phosphocysteine intermediate is Cys291. Cys291 carries the post-translational modification Cysteine sulfenic acid (-SOH).

Belongs to the protein-tyrosine phosphatase family. Non-receptor class subfamily. Monomer. Interacts with MAPK1, MAPK3 and several other MAP kinases. Post-translationally, phosphorylated on serine residues in resting T-cells. Phosphorylation increases upon exposure to stimuli that increase intracellular cAMP levels. Phosphorylation leads to dissociation of bound MAP kinases. Oxidized at active site cysteine. Treatment with pervanadate (vanadate and H(2)O(2)) or with antigen enhanced oxidation of active site cysteine. Expressed exclusively in thymus and spleen.

It localises to the cytoplasm. The protein resides in the cytoskeleton. The enzyme catalyses O-phospho-L-tyrosyl-[protein] + H2O = L-tyrosyl-[protein] + phosphate. With respect to regulation, inhibited in cells after FCER1A triggering. Its function is as follows. Protein phosphatase that acts preferentially on tyrosine-phosphorylated MAPK1. Plays a role in the regulation of T and B-lymphocyte development and signal transduction. This is Tyrosine-protein phosphatase non-receptor type 7 (PTPN7) from Homo sapiens (Human).